A 1013-amino-acid polypeptide reads, in one-letter code: GTPase-activating protein BEM3 (1013 aa).

Disordered regions lie at residues 90–197, 258–277, 282–301, and 307–421; these read TVVE…GSPA, GSRY…PESI, SDLQ…TDLG, and VDTT…HQSK. Polar residues predominate over residues 143-160; it reads QEATSGAQQVPLLTSSKS. 3 stretches are compositionally biased toward polar residues: residues 309-319, 333-388, and 404-418; these read TTFNAEDNPTG, TLQN…TSSN, and KSYS…SNSH. Residues 555-662 enclose the PH domain; it reads EFAKEGMLLV…WISVLTTLCD (108 aa). The segment at 702–726 is disordered; the sequence is AMDATSPTRPNDPNPVSLTSEEEKE. Residues 706–720 are compositionally biased toward polar residues; that stretch reads TSPTRPNDPNPVSLT. The Rho-GAP domain occupies 799 to 1013; it reads LQLSSHPYQG…PPVNIHIPQI (215 aa).

It is found in the cytoplasm. Functionally, GTPase-activating protein (GAP) for CDC42 and less efficiently for RHO1. Negative regulator of the pheromone-response pathway through the STE20 protein kinase. The protein is GTPase-activating protein BEM3 (BEM3) of Eremothecium gossypii (strain ATCC 10895 / CBS 109.51 / FGSC 9923 / NRRL Y-1056) (Yeast).